The following is a 156-amino-acid chain: Deoxyuridine 5'-triphosphate nucleotidohydrolase (156 aa).

Substrate is bound by residues 76–78 (RSG), Asn-89, 93–95 (TVD), and Lys-103.

It belongs to the dUTPase family. It depends on Mg(2+) as a cofactor.

It carries out the reaction dUTP + H2O = dUMP + diphosphate + H(+). It participates in pyrimidine metabolism; dUMP biosynthesis; dUMP from dCTP (dUTP route): step 2/2. Its function is as follows. This enzyme is involved in nucleotide metabolism: it produces dUMP, the immediate precursor of thymidine nucleotides and it decreases the intracellular concentration of dUTP so that uracil cannot be incorporated into DNA. This is Deoxyuridine 5'-triphosphate nucleotidohydrolase from Rhizobium johnstonii (strain DSM 114642 / LMG 32736 / 3841) (Rhizobium leguminosarum bv. viciae).